The primary structure comprises 384 residues: Galactokinase (384 aa).

34 to 37 (EHTD) contributes to the substrate binding site. Residue 123-129 (SSGLSSS) coordinates ATP. Mg(2+) is bound by residues serine 129 and glutamate 161. Aspartate 173 acts as the Proton acceptor in catalysis. Tyrosine 222 serves as a coordination point for substrate.

This sequence belongs to the GHMP kinase family. GalK subfamily.

It is found in the cytoplasm. The catalysed reaction is alpha-D-galactose + ATP = alpha-D-galactose 1-phosphate + ADP + H(+). It functions in the pathway carbohydrate metabolism; galactose metabolism. In terms of biological role, catalyzes the transfer of the gamma-phosphate of ATP to D-galactose to form alpha-D-galactose-1-phosphate (Gal-1-P). This is Galactokinase from Actinobacillus pleuropneumoniae serotype 3 (strain JL03).